Reading from the N-terminus, the 422-residue chain is MVMVLSESLSTRGADSIACGTFSRELHTPKKMSQGPTLFSCGIMENDRWRDLDRKCPLQIDQPSTSIWECLPEKDSSLWHREAVTACAVTSLIKDLSISDHNGNPSAPPSKRQCRSLSFSDEMSSCRTSWRPLGSKVWTPVEKRRCYSGGSVQRYSNGFSTMQRSSSFSLPSRANVLSSPCDQAGLHHRFGGQPCQGVPGSAPCGQAGDTWSPDLHPVGGGRLDLQRSLSCSHEQFSFVEYCPPSANSTPASTPELARRSSGLSRSRSQPCVLNDKKVGVKRRRPEEVQEQRPSLDLAKMAQNCQTFSSLSCLSAGTEDCGPQSPFARHVSNTRAWTALLSASGPGGRTPAGTPVPEPLPPSFDDHLACQEDLSCEESDSCALDEDCGRRAEPAAAWRDRGAPGNSLCSLDGELDIEQIEKN.

A phosphoserine mark is found at S118, S167, S169, S179, S212, and S268. Low complexity predominate over residues 245–268 (SANSTPASTPELARRSSGLSRSRS). A disordered region spans residues 245–269 (SANSTPASTPELARRSSGLSRSRSQ). Residues 281 to 284 (KRRR) carry the Nuclear localization signal motif.

This sequence belongs to the FAM53 family. Interacts with CTNNB1. In terms of tissue distribution, detected in skeletal muscle, kidney, spleen, thyroid, testis, ovary, small intestine, colon and peripheral blood.

It is found in the nucleus. Acts as a regulator of Wnt signaling pathway by regulating beta-catenin (CTNNB1) nuclear localization. The sequence is that of Protein FAM53B from Homo sapiens (Human).